A 158-amino-acid chain; its full sequence is Ribosome maturation factor RimP (158 aa).

Belongs to the RimP family.

The protein localises to the cytoplasm. Functionally, required for maturation of 30S ribosomal subunits. This is Ribosome maturation factor RimP from Pseudomonas putida (strain ATCC 47054 / DSM 6125 / CFBP 8728 / NCIMB 11950 / KT2440).